The following is a 264-amino-acid chain: Thymidylate synthase (264 aa).

R21 contributes to the dUMP binding site. H51 contacts (6R)-5,10-methylene-5,6,7,8-tetrahydrofolate. 126-127 (RR) is a dUMP binding site. C146 serves as the catalytic Nucleophile. Residues 166-169 (RSCD), N177, and 207-209 (HLY) each bind dUMP. Position 169 (D169) interacts with (6R)-5,10-methylene-5,6,7,8-tetrahydrofolate. Residue A263 coordinates (6R)-5,10-methylene-5,6,7,8-tetrahydrofolate.

The protein belongs to the thymidylate synthase family. Bacterial-type ThyA subfamily. In terms of assembly, homodimer.

Its subcellular location is the cytoplasm. The catalysed reaction is dUMP + (6R)-5,10-methylene-5,6,7,8-tetrahydrofolate = 7,8-dihydrofolate + dTMP. The protein operates within pyrimidine metabolism; dTTP biosynthesis. Catalyzes the reductive methylation of 2'-deoxyuridine-5'-monophosphate (dUMP) to 2'-deoxythymidine-5'-monophosphate (dTMP) while utilizing 5,10-methylenetetrahydrofolate (mTHF) as the methyl donor and reductant in the reaction, yielding dihydrofolate (DHF) as a by-product. This enzymatic reaction provides an intracellular de novo source of dTMP, an essential precursor for DNA biosynthesis. This Xenorhabdus nematophila (strain ATCC 19061 / DSM 3370 / CCUG 14189 / LMG 1036 / NCIMB 9965 / AN6) protein is Thymidylate synthase.